The sequence spans 636 residues: 1-deoxy-D-xylulose-5-phosphate synthase (636 aa).

Residues H72 and 113–115 (GHA) each bind thiamine diphosphate. Residue D144 participates in Mg(2+) binding. Residues 145–146 (GA), N174, Y287, and E370 each bind thiamine diphosphate. N174 provides a ligand contact to Mg(2+).

Belongs to the transketolase family. DXPS subfamily. Homodimer. Requires Mg(2+) as cofactor. The cofactor is thiamine diphosphate.

The catalysed reaction is D-glyceraldehyde 3-phosphate + pyruvate + H(+) = 1-deoxy-D-xylulose 5-phosphate + CO2. The protein operates within metabolic intermediate biosynthesis; 1-deoxy-D-xylulose 5-phosphate biosynthesis; 1-deoxy-D-xylulose 5-phosphate from D-glyceraldehyde 3-phosphate and pyruvate: step 1/1. In terms of biological role, catalyzes the acyloin condensation reaction between C atoms 2 and 3 of pyruvate and glyceraldehyde 3-phosphate to yield 1-deoxy-D-xylulose-5-phosphate (DXP). In Rippkaea orientalis (strain PCC 8801 / RF-1) (Cyanothece sp. (strain PCC 8801)), this protein is 1-deoxy-D-xylulose-5-phosphate synthase.